Reading from the N-terminus, the 347-residue chain is Dihydroorotate dehydrogenase (quinone) (347 aa).

FMN is bound by residues 62–66 and alanine 86; that span reads AGLDK. Residue lysine 66 coordinates substrate. Substrate is bound at residue 111-115; sequence NRMGF. 2 residues coordinate FMN: asparagine 139 and asparagine 172. Asparagine 172 lines the substrate pocket. Serine 175 acts as the Nucleophile in catalysis. A substrate-binding site is contributed by asparagine 177. Lysine 217 and threonine 245 together coordinate FMN. 246–247 contacts substrate; it reads NT. Residues glycine 268, glycine 297, and 318–319 contribute to the FMN site; that span reads YT.

The protein belongs to the dihydroorotate dehydrogenase family. Type 2 subfamily. In terms of assembly, monomer. Requires FMN as cofactor.

The protein localises to the cell membrane. The enzyme catalyses (S)-dihydroorotate + a quinone = orotate + a quinol. The protein operates within pyrimidine metabolism; UMP biosynthesis via de novo pathway; orotate from (S)-dihydroorotate (quinone route): step 1/1. Its function is as follows. Catalyzes the conversion of dihydroorotate to orotate with quinone as electron acceptor. In Coxiella burnetii (strain CbuK_Q154) (Coxiella burnetii (strain Q154)), this protein is Dihydroorotate dehydrogenase (quinone).